The chain runs to 149 residues: 3-dehydroquinate dehydratase (149 aa).

The active-site Proton acceptor is the Tyr-24. The substrate site is built by Asn-76, His-82, and Asp-89. Residue His-102 is the Proton donor of the active site. Residues 103–104 (LS) and Arg-113 each bind substrate.

It belongs to the type-II 3-dehydroquinase family. As to quaternary structure, homododecamer.

It carries out the reaction 3-dehydroquinate = 3-dehydroshikimate + H2O. Its pathway is metabolic intermediate biosynthesis; chorismate biosynthesis; chorismate from D-erythrose 4-phosphate and phosphoenolpyruvate: step 3/7. Its function is as follows. Catalyzes a trans-dehydration via an enolate intermediate. The sequence is that of 3-dehydroquinate dehydratase from Acinetobacter baylyi (strain ATCC 33305 / BD413 / ADP1).